The chain runs to 356 residues: GTPase Obg (356 aa).

Positions 1–158 (MFIDSVKITL…RLVRLELKLI (158 aa)) constitute an Obg domain. The OBG-type G domain occupies 159-339 (ADVGLVGFPN…LKFMLLEEIK (181 aa)). GTP contacts are provided by residues 165–172 (GFPNVGKS), 190–194 (FTTLT), 212–215 (DIPG), 280–283 (SKSD), and 320–322 (SSL). 2 residues coordinate Mg(2+): Ser-172 and Thr-192.

Belongs to the TRAFAC class OBG-HflX-like GTPase superfamily. OBG GTPase family. Monomer. It depends on Mg(2+) as a cofactor.

The protein localises to the cytoplasm. Functionally, an essential GTPase which binds GTP, GDP and possibly (p)ppGpp with moderate affinity, with high nucleotide exchange rates and a fairly low GTP hydrolysis rate. Plays a role in control of the cell cycle, stress response, ribosome biogenesis and in those bacteria that undergo differentiation, in morphogenesis control. This Campylobacter jejuni subsp. jejuni serotype O:23/36 (strain 81-176) protein is GTPase Obg.